The following is a 392-amino-acid chain: ATP phosphoribosyltransferase regulatory subunit (392 aa).

It belongs to the class-II aminoacyl-tRNA synthetase family. HisZ subfamily. In terms of assembly, heteromultimer composed of HisG and HisZ subunits.

It is found in the cytoplasm. It participates in amino-acid biosynthesis; L-histidine biosynthesis; L-histidine from 5-phospho-alpha-D-ribose 1-diphosphate: step 1/9. In terms of biological role, required for the first step of histidine biosynthesis. May allow the feedback regulation of ATP phosphoribosyltransferase activity by histidine. This Synechococcus sp. (strain WH7803) protein is ATP phosphoribosyltransferase regulatory subunit.